Consider the following 336-residue polypeptide: tRNA N6-adenosine threonylcarbamoyltransferase (336 aa).

Fe cation-binding residues include His114 and His118. Residues 136–140 (LVSGG), Asp169, Gly182, Asp186, and Asn275 each bind substrate. Asp302 provides a ligand contact to Fe cation.

It belongs to the KAE1 / TsaD family. Requires Fe(2+) as cofactor.

It is found in the cytoplasm. It catalyses the reaction L-threonylcarbamoyladenylate + adenosine(37) in tRNA = N(6)-L-threonylcarbamoyladenosine(37) in tRNA + AMP + H(+). Functionally, required for the formation of a threonylcarbamoyl group on adenosine at position 37 (t(6)A37) in tRNAs that read codons beginning with adenine. Is involved in the transfer of the threonylcarbamoyl moiety of threonylcarbamoyl-AMP (TC-AMP) to the N6 group of A37, together with TsaE and TsaB. TsaD likely plays a direct catalytic role in this reaction. The polypeptide is tRNA N6-adenosine threonylcarbamoyltransferase (Streptococcus agalactiae serotype Ia (strain ATCC 27591 / A909 / CDC SS700)).